The primary structure comprises 286 residues: Bifunctional protein FolD (286 aa).

NADP(+)-binding positions include G166–S168 and S191.

It belongs to the tetrahydrofolate dehydrogenase/cyclohydrolase family. Homodimer.

It catalyses the reaction (6R)-5,10-methylene-5,6,7,8-tetrahydrofolate + NADP(+) = (6R)-5,10-methenyltetrahydrofolate + NADPH. The catalysed reaction is (6R)-5,10-methenyltetrahydrofolate + H2O = (6R)-10-formyltetrahydrofolate + H(+). The protein operates within one-carbon metabolism; tetrahydrofolate interconversion. Functionally, catalyzes the oxidation of 5,10-methylenetetrahydrofolate to 5,10-methenyltetrahydrofolate and then the hydrolysis of 5,10-methenyltetrahydrofolate to 10-formyltetrahydrofolate. The sequence is that of Bifunctional protein FolD from Lactiplantibacillus plantarum (strain ATCC BAA-793 / NCIMB 8826 / WCFS1) (Lactobacillus plantarum).